The sequence spans 241 residues: Octanoyltransferase (241 aa).

In terms of domain architecture, BPL/LPL catalytic spans 38–227 (AGGPDTLLLL…AVCNALDGAL (190 aa)). Residues 85–92 (RGGKITWH), 157–159 (AIG), and 170–172 (GFA) each bind substrate. Catalysis depends on Cys188, which acts as the Acyl-thioester intermediate.

This sequence belongs to the LipB family.

It localises to the cytoplasm. It carries out the reaction octanoyl-[ACP] + L-lysyl-[protein] = N(6)-octanoyl-L-lysyl-[protein] + holo-[ACP] + H(+). Its pathway is protein modification; protein lipoylation via endogenous pathway; protein N(6)-(lipoyl)lysine from octanoyl-[acyl-carrier-protein]: step 1/2. Catalyzes the transfer of endogenously produced octanoic acid from octanoyl-acyl-carrier-protein onto the lipoyl domains of lipoate-dependent enzymes. Lipoyl-ACP can also act as a substrate although octanoyl-ACP is likely to be the physiological substrate. In Mycobacterium ulcerans (strain Agy99), this protein is Octanoyltransferase.